We begin with the raw amino-acid sequence, 550 residues long: MEDLKKSVTNIVHSMYNFDCSEIVSLTRPPKPEYGDWALSLPLKLASLLKSPAIDIAQSIASALLELDGVQDVYVAKPGFINLKLSREHTTGIISEVLEQGSSFGRNTTQSSKKINLEFVSGNPTGPLHLAHTRWAAVGDSIARILINCGADVTREYYINNVGNQIHLFSESVYARALSKSLPKDGYPGEYVKDIARRIQCEFPNIIDLSYEDAIKIFRKRSWQIQIEEIKKSCIAFRVNFDVWFSEESLHEPDRFGKSQIDKALARCKQNGYLFQKNGAFFIRTTEFGDDKDRAVLRSDTSYTYYAADCAYYLNKINRGFSDLVILVGADHHGYVKRFQAMSNIFHVDSENNRKNVQVLLGQMVSLKNKRQSKREGNVIGLSEIIQSVGVDPLRFWFCRYPIDTPIDLDEQHLKKRSNDNPVYYVQYAYARTRSLIRSANLLQMEKFGFFPELLVHETETALVSLLYDYKTVVIDAARFLQPHRVVRYLESLAGAYHKWYDKCRIIPRKGILDKSEAELVNTRLELNRAVGQVLYNALDLIGVSAPERM.

Positions Gly122–His132 match the 'HIGH' region motif.

This sequence belongs to the class-I aminoacyl-tRNA synthetase family. As to quaternary structure, monomer.

The protein localises to the cytoplasm. The catalysed reaction is tRNA(Arg) + L-arginine + ATP = L-arginyl-tRNA(Arg) + AMP + diphosphate. The sequence is that of Arginine--tRNA ligase from Tropheryma whipplei (strain TW08/27) (Whipple's bacillus).